A 589-amino-acid polypeptide reads, in one-letter code: Kelch-like protein diablo (589 aa).

Residues 1–22 (MGDVLISDRPPSPARLSHTSEK) are disordered. The BTB domain maps to 41 to 108 (CDVVINVSGR…CYTSHIVVEE (68 aa)). The 103-residue stretch at 143 to 245 (CLGIRAFADT…SPKFLVGTVG (103 aa)) folds into the BACK domain. 6 Kelch repeats span residues 292–338 (VLFA…VLND), 340–386 (LYAV…VLDG), 387–433 (FLYA…VLGG), 435–480 (LYAI…VFNN), 482–527 (IYAV…VVNG), and 528–574 (QLYA…VMRA).

Its pathway is protein modification; protein ubiquitination. In terms of biological role, probable substrate-specific adapter of an E3 ubiquitin-protein ligase complex which mediates the ubiquitination and subsequent proteasomal degradation of target proteins. May have a role in synapse differentiation and growth. This is Kelch-like protein diablo from Aedes aegypti (Yellowfever mosquito).